Here is a 117-residue protein sequence, read N- to C-terminus: Holo-[acyl-carrier-protein] synthase (117 aa).

Mg(2+) contacts are provided by D8 and E58.

It belongs to the P-Pant transferase superfamily. AcpS family. It depends on Mg(2+) as a cofactor.

The protein localises to the cytoplasm. The enzyme catalyses apo-[ACP] + CoA = holo-[ACP] + adenosine 3',5'-bisphosphate + H(+). In terms of biological role, transfers the 4'-phosphopantetheine moiety from coenzyme A to a Ser of acyl-carrier-protein. This chain is Holo-[acyl-carrier-protein] synthase, found in Enterococcus faecalis (strain ATCC 700802 / V583).